Consider the following 272-residue polypeptide: Tryptophan synthase alpha chain (272 aa).

Catalysis depends on proton acceptor residues glutamate 49 and glutamate 60.

The protein belongs to the TrpA family. In terms of assembly, tetramer of two alpha and two beta chains.

It carries out the reaction (1S,2R)-1-C-(indol-3-yl)glycerol 3-phosphate + L-serine = D-glyceraldehyde 3-phosphate + L-tryptophan + H2O. It functions in the pathway amino-acid biosynthesis; L-tryptophan biosynthesis; L-tryptophan from chorismate: step 5/5. The alpha subunit is responsible for the aldol cleavage of indoleglycerol phosphate to indole and glyceraldehyde 3-phosphate. This Legionella pneumophila (strain Paris) protein is Tryptophan synthase alpha chain.